The primary structure comprises 709 residues: Protein IMPAIRED IN BABA-INDUCED STERILITY 1 (709 aa).

G2 carries the N-myristoyl glycine lipid modification. The interval S53 to S80 is disordered. In terms of domain architecture, Protein kinase spans F131–F418. ATP contacts are provided by residues I137–V145 and K160. The Proton acceptor role is filled by D255. Disordered stretches follow at residues S434–G536 and S566–E609. Positions K437–R449 are enriched in basic and acidic residues. Residues H484–H494 are compositionally biased toward basic residues. Polar residues predominate over residues S495–T505. Basic and acidic residues-rich tracts occupy residues K509–H523 and V586–E609.

Belongs to the protein kinase superfamily. Ser/Thr protein kinase family.

Required for beta-aminobutyric acid (BABA)-induced resistance (BABA-IR) against bacteria (e.g. P.syringae) and oomycetes (e.g. H.parasitica) via priming for salicylate (SA)-dependent defense responses such as pathogenesis-related PR-1 gene expression and trailing necrosis. Involved in BABA-mediated sterility. Necessary for the inheritance of BABA-priming to next generation, especially for the primed to be primed phenotype which consists in an enhanced second BABA-priming in transgenerationally primed plants. The sequence is that of Protein IMPAIRED IN BABA-INDUCED STERILITY 1 from Arabidopsis thaliana (Mouse-ear cress).